Reading from the N-terminus, the 361-residue chain is Outer membrane protein P2 (361 aa).

The N-terminal stretch at 1–20 is a signal peptide; it reads MKKTLAALIVGAFAASAANA.

The protein belongs to the Gram-negative porin family. Homotrimer.

The protein resides in the cell outer membrane. In terms of biological role, forms pores that allow passive diffusion of small molecules across the outer membrane. This Haemophilus influenzae protein is Outer membrane protein P2 (ompP2).